Reading from the N-terminus, the 362-residue chain is Serine/threonine-protein kinase SRK2E (362 aa).

A phosphoserine; by autocatalysis mark is found at S7, S18, S29, and S43. The Protein kinase domain occupies Y21–F277. I27 to A35 contributes to the ATP binding site. K50 contributes to the ATP binding site. The active-site Proton acceptor is the D140. An activation loop region spans residues D160–E186. S175 carries the post-translational modification Phosphoserine. Positions A283 to P318 are domain I; osmotic stress response, required for the kinase activity. A domain II; ABA response and ABI1 binding region spans residues P319–M362.

It belongs to the protein kinase superfamily. Ser/Thr protein kinase family. As to quaternary structure, interacts with ABI1, PP2CA and SLAC1. Interacts with B'ALPHA, B'BETA, B'DELTA, PP2AA2, PP2AA3, PP2A1 and PP2A2. Associates with MAPKKK18 within the nucleus. Interacts with I-2, TOPP1 and TOPP2. Interacts with ABI2. In terms of processing, autophosphorylation on residues Ser-7, Ser-18, Ser-29, Ser-43, Ser-175 and/or Thr-176. Only the phosphorylation of Ser-175 is crucial for the kinase activity. The phosphorylation of Ser-43 may repress the ABA signaling pathway in absence of ABA. Expressed in seedlings, leaves, flowers, stems, and roots, but restricted to guard cells and vascular tissue.

It localises to the nucleus. The catalysed reaction is L-seryl-[protein] + ATP = O-phospho-L-seryl-[protein] + ADP + H(+). It carries out the reaction L-threonyl-[protein] + ATP = O-phospho-L-threonyl-[protein] + ADP + H(+). Kinase activity enhanced by ABA and low humidity. Repressed by PP2CA independently of its phosphatase activity. Probably inactivated by ABI1. Repressed by TOPP1. Negatively regulated by ABI2. Its function is as follows. Activator of the abscisic acid (ABA) signaling pathway that regulates numerous ABA responses, such as stomata closure in response to drought, darkness, high CO(2), plant pathogens, or decreases in atmospheric relative humidity (RH). Involved in the resistance to drought by avoiding water loss. Required for the stomata closure mediated by pathogen-associated molecular pattern (PAMPs) (e.g. flg22 and LPS) of pathogenic bacteria such as P.syringae pv. tomato (Pst) and E.coli O157:H7. As a plant defense process, stomata are closed transiently in order to limit invaders, but actively reopened by bacteria after a few hours; virulent strains (e.g. Pst DC3000) are more efficient than avirulent strains (e.g. Pst DC3000 AvrRpt2) in reopening stomata. Mediates the phosphorylation and activation of the S-type anion efflux channel SLAC1, and thus promotes stomata closure. Essential for stomatal closure in response to reactive oxygen species (ROS). Promotes MAPKKK18 activity upon abscisic acid (ABA) treatment. The chain is Serine/threonine-protein kinase SRK2E from Arabidopsis thaliana (Mouse-ear cress).